A 142-amino-acid chain; its full sequence is Large ribosomal subunit protein uL11 (142 aa).

The protein belongs to the universal ribosomal protein uL11 family. As to quaternary structure, part of the ribosomal stalk of the 50S ribosomal subunit. Interacts with L10 and the large rRNA to form the base of the stalk. L10 forms an elongated spine to which L12 dimers bind in a sequential fashion forming a multimeric L10(L12)X complex. In terms of processing, one or more lysine residues are methylated.

Its function is as follows. Forms part of the ribosomal stalk which helps the ribosome interact with GTP-bound translation factors. The chain is Large ribosomal subunit protein uL11 from Shewanella sediminis (strain HAW-EB3).